We begin with the raw amino-acid sequence, 416 residues long: Gamma-glutamyl phosphate reductase (416 aa).

It belongs to the gamma-glutamyl phosphate reductase family.

The protein localises to the cytoplasm. It catalyses the reaction L-glutamate 5-semialdehyde + phosphate + NADP(+) = L-glutamyl 5-phosphate + NADPH + H(+). It participates in amino-acid biosynthesis; L-proline biosynthesis; L-glutamate 5-semialdehyde from L-glutamate: step 2/2. Its function is as follows. Catalyzes the NADPH-dependent reduction of L-glutamate 5-phosphate into L-glutamate 5-semialdehyde and phosphate. The product spontaneously undergoes cyclization to form 1-pyrroline-5-carboxylate. The polypeptide is Gamma-glutamyl phosphate reductase (Salmonella paratyphi A (strain AKU_12601)).